The primary structure comprises 468 residues: Tyramine receptor tyra-2 (468 aa).

Residues 1-23 (MMSSYVMSPVDETYTLFQILKGS) are Extracellular-facing. Residues 24–43 (ALFLLVLWTIFANSLVFIVL) form a helical membrane-spanning segment. Topologically, residues 44–54 (YKNPRLQTVPN) are cytoplasmic. A helical membrane pass occupies residues 55–77 (LLVGNLAFSDLALGLIVLPLSSV). The Extracellular portion of the chain corresponds to 78-91 (YAIAGEWVFPDALC). A disulfide bond links cysteine 91 and cysteine 177. The chain crosses the membrane as a helical span at residues 92–114 (EVFVSADILCSTASIWNLSIVGL). Residues 115–134 (DRYWAITSPVAYMSKRNKRT) are Cytoplasmic-facing. The chain crosses the membrane as a helical span at residues 135 to 157 (AGIMILSVWISSALISLAPLLGW). Over 158–186 (KQTAQTPNLIYEKNNTVRQCTFLDLPSYT) the chain is Extracellular. Asparagine 171 carries an N-linked (GlcNAc...) asparagine glycan. A helical transmembrane segment spans residues 187 to 209 (VYSATGSFFIPTLLMFFVYFKIY). At 210 to 387 (QAFAKHRARQ…SAAKERRGVK (178 aa)) the chain is on the cytoplasmic side. The disordered stretch occupies residues 252–306 (DEFAKEEEEEEDSESSGQVENGLGNGNDAIIEEDECEDEDSDEKRDDHTSMTTVT). 2 stretches are compositionally biased toward acidic residues: residues 255–265 (AKEEEEEEDSE) and 281–292 (IIEEDECEDEDS). Residues 388-410 (VLGIILGCFTVCWAPFFTMYVLV) traverse the membrane as a helical segment. Residues 411–424 (QFCKDCSPNAHIEM) lie on the Extracellular side of the membrane. The helical transmembrane segment at 425–444 (FITWLGYSNSAMNPIIYTVF) threads the bilayer. The Cytoplasmic portion of the chain corresponds to 445 to 468 (NRDYQIALKRLFTSEKKPSSTSRV).

It belongs to the G-protein coupled receptor 1 family. Expressed in the pharyngeal neurons, MCL/R and NSML/R and the AS group of amphidial sensory neurons, ASEL/R, AGSL/R, ASHL/R and ASIL/R.

It localises to the cell membrane. Functionally, G-protein coupled receptor for tyramine, a known neurotransmitter and neuromodulator and direct precursor of octopamine. Expression in amphidial sensory neurons suggests a role in chemosensation. This chain is Tyramine receptor tyra-2 (tyra-2), found in Caenorhabditis elegans.